Here is a 191-residue protein sequence, read N- to C-terminus: Vascular endothelial growth factor A (191 aa).

The signal sequence occupies residues 1-26 (MNFLLTWIHWGLAALLYFHNAKVLQA). 3 cysteine pairs are disulfide-bonded: C52–C94, C83–C128, and C87–C130. The N-linked (GlcNAc...) asparagine glycan is linked to N101.

The protein belongs to the PDGF/VEGF growth factor family. In terms of assembly, homodimer; disulfide-linked. Also found as heterodimer with PGF. Expressed by the venom gland, and probably other tissues.

The protein localises to the secreted. Growth factor active in angiogenesis, vasculogenesis and endothelial cell growth. Induces endothelial cell proliferation, promotes cell migration, inhibits apoptosis and induces permeabilization of blood vessels. Binds to heparan sulfate and heparin. The chain is Vascular endothelial growth factor A from Bitis gabonica (Gaboon adder).